A 336-amino-acid polypeptide reads, in one-letter code: Protein DIA1 (336 aa).

Its subcellular location is the cytoplasm. Its function is as follows. Involved in regulation of invasive growth. The polypeptide is Protein DIA1 (DIA1) (Saccharomyces cerevisiae (strain ATCC 204508 / S288c) (Baker's yeast)).